Consider the following 744-residue polypeptide: Elongation factor G, mitochondrial (744 aa).

The 278-residue stretch at 39 to 316 (EKIRNIGISA…AVIDYLPNPG (278 aa)) folds into the tr-type G domain. Residues 48-55 (AHIDSGKT), 115-119 (DTPGH), and 169-172 (NKLD) each bind GTP. The segment covering 725 to 735 (VRQYQETQGAS) has biased composition (polar residues). Residues 725–744 (VRQYQETQGASQPDKKKKKN) form a disordered region.

It belongs to the TRAFAC class translation factor GTPase superfamily. Classic translation factor GTPase family. EF-G/EF-2 subfamily.

The protein resides in the mitochondrion. The protein operates within protein biosynthesis; polypeptide chain elongation. In terms of biological role, mitochondrial GTPase that catalyzes the GTP-dependent ribosomal translocation step during translation elongation. During this step, the ribosome changes from the pre-translocational (PRE) to the post-translocational (POST) state as the newly formed A-site-bound peptidyl-tRNA and P-site-bound deacylated tRNA move to the P and E sites, respectively. Catalyzes the coordinated movement of the two tRNA molecules, the mRNA and conformational changes in the ribosome. Essential during development as it acts as a retrograde signal from mitochondria to the nucleus to slow down cell proliferation if mitochondrial energy output is low. This is Elongation factor G, mitochondrial from Drosophila pseudoobscura pseudoobscura (Fruit fly).